The primary structure comprises 330 residues: Palmitoyltransferase SWF1 (330 aa).

Residues methionine 1 to proline 21 form a helical membrane-spanning segment. Residues glutamine 22–lysine 50 lie on the Cytoplasmic side of the membrane. The chain crosses the membrane as a helical span at residues phenylalanine 51–serine 71. The Lumenal portion of the chain corresponds to arginine 72–threonine 86. Residues tyrosine 87–isoleucine 107 form a helical membrane-spanning segment. At lysine 108–serine 181 the chain is on the cytoplasmic side. One can recognise a DHHC domain in the interval histidine 134–cysteine 184. The chain crosses the membrane as a helical span at residues phenylalanine 182 to phenylalanine 202. Topologically, residues asparagine 203–leucine 218 are lumenal. The helical transmembrane segment at isoleucine 219–phenylalanine 239 threads the bilayer. At glutamate 240–glycine 330 the chain is on the cytoplasmic side.

The protein belongs to the DHHC palmitoyltransferase family. SWF1 subfamily.

The protein localises to the endoplasmic reticulum membrane. It catalyses the reaction L-cysteinyl-[protein] + hexadecanoyl-CoA = S-hexadecanoyl-L-cysteinyl-[protein] + CoA. Its function is as follows. Palmitoyltransferase that targets several endosomal SNAREs. Palmitoylates the SNAREs at cysteine residues close to the cytoplasmic end of their transmembrane domain. May have a role in the cellular quality control of transmembrane domain-containing proteins. This is Palmitoyltransferase SWF1 (SWF1) from Candida glabrata (strain ATCC 2001 / BCRC 20586 / JCM 3761 / NBRC 0622 / NRRL Y-65 / CBS 138) (Yeast).